A 429-amino-acid chain; its full sequence is Glutamate-1-semialdehyde 2,1-aminomutase (429 aa).

The residue at position 265 (Lys265) is an N6-(pyridoxal phosphate)lysine.

This sequence belongs to the class-III pyridoxal-phosphate-dependent aminotransferase family. HemL subfamily. Homodimer. Requires pyridoxal 5'-phosphate as cofactor.

The protein resides in the cytoplasm. The catalysed reaction is (S)-4-amino-5-oxopentanoate = 5-aminolevulinate. It participates in porphyrin-containing compound metabolism; protoporphyrin-IX biosynthesis; 5-aminolevulinate from L-glutamyl-tRNA(Glu): step 2/2. The chain is Glutamate-1-semialdehyde 2,1-aminomutase from Azotobacter vinelandii (strain DJ / ATCC BAA-1303).